A 184-amino-acid chain; its full sequence is Peptide deformylase (184 aa).

Residues cysteine 111 and histidine 154 each contribute to the Fe cation site. Glutamate 155 is a catalytic residue. Histidine 158 is a binding site for Fe cation.

This sequence belongs to the polypeptide deformylase family. It depends on Fe(2+) as a cofactor.

It catalyses the reaction N-terminal N-formyl-L-methionyl-[peptide] + H2O = N-terminal L-methionyl-[peptide] + formate. Its function is as follows. Removes the formyl group from the N-terminal Met of newly synthesized proteins. Requires at least a dipeptide for an efficient rate of reaction. N-terminal L-methionine is a prerequisite for activity but the enzyme has broad specificity at other positions. This Lactobacillus gasseri (strain ATCC 33323 / DSM 20243 / BCRC 14619 / CIP 102991 / JCM 1131 / KCTC 3163 / NCIMB 11718 / NCTC 13722 / AM63) protein is Peptide deformylase.